The primary structure comprises 763 residues: Cyclin-F (763 aa).

A Nuclear localization signal 1 motif is present at residues 19–27; sequence KRRVKRRPR. The F-box domain maps to 28–75; the sequence is VLTLLSLPEDVLLYVLECLPAVDILSMREVHPHLRSLVDSHSSVWARA. The region spanning 299-411 is the Cyclin N-terminal domain; that stretch reads INKTSIFTTQ…EIISALEGKI (113 aa). 2 short sequence motifs (d box) span residues 316 to 319 and 355 to 358; these read RYIL and RAKL. 2 disordered regions span residues 574–600 and 677–763; these read GSKTKRRREDSIQEDRGSFVTTPTAEL and KLEN…SDEL. The Nuclear localization signal 2 signature appears at 575–581; sequence SKTKRRR. Basic and acidic residues predominate over residues 580–590; the sequence is RREDSIQEDRG. The tract at residues 589–747 is PEST; sequence RGSFVTTPTA…LFKASRRQVK (159 aa). Positions 692–710 are enriched in low complexity; the sequence is SSGYSSVSSGGSPTSSSSP. Over residues 741–751 the composition is skewed to basic residues; that stretch reads ASRRQVKRKNQ.

It belongs to the cyclin family. Cyclin AB subfamily. Component of the SCF(CCNF) complex.

Its subcellular location is the nucleus. The protein resides in the cytoplasm. The protein localises to the perinuclear region. It is found in the cytoskeleton. It localises to the microtubule organizing center. Its subcellular location is the centrosome. The protein resides in the centriole. In terms of biological role, substrate recognition component of the SCF(CCNF) E3 ubiquitin-protein ligase complex which mediates the ubiquitination and subsequent proteasomal degradation of target proteins. The SCF(CCNF) E3 ubiquitin-protein ligase complex is an integral component of the ubiquitin proteasome system (UPS) and links proteasome degradation to the cell cycle. Mediates the substrate recognition and the proteasomal degradation of various target proteins during G2 phase involved in the regulation of cell cycle progression and in the maintenance of genome stability. The chain is Cyclin-F (ccnf) from Xenopus tropicalis (Western clawed frog).